Reading from the N-terminus, the 172-residue chain is Peptidyl-prolyl cis-trans isomerase (172 aa).

In terms of domain architecture, PPIase cyclophilin-type spans 7-170 (FFDMAIAGNP…RPVTIADCGQ (164 aa)).

Belongs to the cyclophilin-type PPIase family. Expressed in meristematic tissues, with higher levels in nodules.

The protein localises to the cytoplasm. It catalyses the reaction [protein]-peptidylproline (omega=180) = [protein]-peptidylproline (omega=0). With respect to regulation, binds cyclosporin A (CsA). CsA mediates some of its effects via an inhibitory action on PPIase. PPIases accelerate the folding of proteins. It catalyzes the cis-trans isomerization of proline imidic peptide bonds in oligopeptides. The polypeptide is Peptidyl-prolyl cis-trans isomerase (Lupinus luteus (European yellow lupine)).